Reading from the N-terminus, the 600-residue chain is CoA ligase FVEG_12633 (600 aa).

ATP is bound by residues 170-174 (TSGTT), H214, 321-323 (AAL), and 342-343 (ER). The segment at 241–342 (NSVWTRLAAP…QLTGGNVLLE (102 aa)) is SBD1. An SBD2 region spans residues 343-420 (RYGMTEVGMA…LRGPTVFTGY (78 aa)). M346 contacts substrate. ATP is bound by residues T347, D441, R471, and K564. An oxalate-binding site is contributed by K564.

The protein belongs to the ATP-dependent AMP-binding enzyme family.

Functionally, coA ligase; part of the Fusarium detoxification of benzoxazolinone cluster 2 (FDB2) involved in the degradation of benzoxazolinones produced by the host plant. Maize, wheat, and rye produce the 2 benzoxazinone phytoanticipins 2,4-dihy-droxy-7-methoxy-1,4-benzoxazin-3-one (DIMBOA) and 2,4-dihydroxy-1,4-benzoxazin-3-one (DIBOA) that, due to their inherent instability once released, spontaneously degrade to the more stable corresponding benzoxazolinones, 6-methoxy-2-benzoxazolinone (MBOA) and 2-benzoxazolinone (BOA), respectively. The first step in the detoxification of benzoxazolinones involves the hydrolysis of the cyclic ester bond of benzoxazolinones by the FDB1 cluster gamma-lactamase MBL1 to aminophenols. MBL1 is able to convert BOA into 2-aminophenol (2-AP), as well as MBOA into 5-methoxy-2-aminophenol (2-AMP). The FDB2 cluster N-malonyltransferase FDB2/NAT1 then metabolizes aminophenols via N-malonylation to non-toxic malonamic acids. FDB2/NAT1 converts 2-AP into N-(2-hydroxyphenyl) malonamic acid (HPMA) and 2-AMP into N-(2-hydroxy-4-methoxyphenyl) malonamic acid (HMPMA). The duplicated dienlactone hydrolases DLH1 and DLH2 may provide redundant function for hydrolyzing the lactone moiety in the BOA molecule. The roles of the amidases an other enzymes encoded by the 2 FDB clusters have not been identified so far. The protein is CoA ligase FVEG_12633 of Gibberella moniliformis (strain M3125 / FGSC 7600) (Maize ear and stalk rot fungus).